We begin with the raw amino-acid sequence, 899 residues long: Translation initiation factor IF-2 (899 aa).

2 disordered regions span residues 31–227 and 240–310; these read KKAE…ATEQ and VTTS…GFDK. 2 stretches are compositionally biased toward polar residues: residues 36-47 and 73-87; these read NVSQTEKQSLLS and STLSVAGTGGKSKSV. 3 stretches are compositionally biased toward basic and acidic residues: residues 101 to 173, 181 to 219, and 247 to 261; these read SALE…EKAK, AKSETELLQLRREEEAKRKAEEDSQRQLEEARKMAETNE, and RAAEDEQDRKEETTG. Over residues 296–308 the composition is skewed to polar residues; the sequence is PQVNAPTSMQQGF. The tr-type G domain occupies 398 to 565; that stretch reads SRAPVVTIMG…AILLQSEILE (168 aa). Positions 407–414 are G1; the sequence is GHVDHGKT. 407 to 414 contributes to the GTP binding site; the sequence is GHVDHGKT. Positions 432-436 are G2; the sequence is GITQH. A G3 region spans residues 453-456; that stretch reads DTPG. GTP is bound by residues 453-457 and 507-510; these read DTPGH and NKID. Positions 507-510 are G4; it reads NKID. Residues 543 to 545 are G5; the sequence is SAK.

Belongs to the TRAFAC class translation factor GTPase superfamily. Classic translation factor GTPase family. IF-2 subfamily.

It is found in the cytoplasm. In terms of biological role, one of the essential components for the initiation of protein synthesis. Protects formylmethionyl-tRNA from spontaneous hydrolysis and promotes its binding to the 30S ribosomal subunits. Also involved in the hydrolysis of GTP during the formation of the 70S ribosomal complex. This is Translation initiation factor IF-2 from Photobacterium profundum (strain SS9).